A 421-amino-acid chain; its full sequence is Alpha-tubulin N-acetyltransferase 1 (421 aa).

The N-acetyltransferase domain occupies 1–190; sequence MEFPFDVDAL…NNFVIFEGFF (190 aa). Lys-56 carries the N6-acetyllysine; by autocatalysis modification. 124–137 lines the acetyl-CoA pocket; it reads FYIHESVQRHGHGR. Lys-146 is subject to N6-acetyllysine; by autocatalysis. 160–169 serves as a coordination point for acetyl-CoA; it reads SQKLLKFLNK. The disordered stretch occupies residues 196 to 235; sequence PPAPSLRATRHSRAAAVDPTPAAPARKLPPKRAEGDIKPY. Low complexity predominate over residues 209-221; sequence AAAVDPTPAAPAR. Basic and acidic residues predominate over residues 226–235; that stretch reads KRAEGDIKPY. 2 positions are modified to N6-acetyllysine; by autocatalysis: Lys-233 and Lys-244. A disordered region spans residues 252–284; sequence PLNRAPRRATPPAHPPPRSSSLGNSPERGPLRP. 2 positions are modified to phosphoserine: Ser-272 and Ser-276. An Asymmetric dimethylarginine modification is found at Arg-305. Positions 306–402 are disordered; the sequence is LLLAADPGGS…PAQSWTVGGD (97 aa). Ser-315 is modified (phosphoserine). Arg-323 carries the post-translational modification Omega-N-methylarginine. Residues 342-354 are compositionally biased toward polar residues; it reads VNSSSPNTGNQDS. A compositionally biased stretch (basic and acidic residues) spans 355 to 367; that stretch reads KQGEQETKNRSAS.

Belongs to the acetyltransferase ATAT1 family. In terms of assembly, component of the BBSome complex. Interacts with AP2 alpha-adaptins, including AP2A2, but not with AP1 gamma-adaptin (AP1G1/AP1G2); this interaction is required for efficient alpha-tubulin acetylation, hence clathrin-coated pits are sites of microtubule acetylation. In terms of processing, autoacetylation strongly increases tubulin acetylation.

It is found in the cytoplasm. The protein localises to the membrane. Its subcellular location is the clathrin-coated pit. The protein resides in the cell junction. It localises to the focal adhesion. It is found in the cell projection. The protein localises to the axon. Its subcellular location is the cytoskeleton. The protein resides in the spindle. It carries out the reaction L-lysyl-[alpha-tubulin] + acetyl-CoA = N(6)-acetyl-L-lysyl-[alpha-tubulin] + CoA + H(+). Its function is as follows. Specifically acetylates 'Lys-40' in alpha-tubulin on the lumenal side of microtubules. Promotes microtubule destabilization and accelerates microtubule dynamics; this activity may be independent of acetylation activity. Acetylates alpha-tubulin with a slow enzymatic rate, due to a catalytic site that is not optimized for acetyl transfer. Enters the microtubule through each end and diffuses quickly throughout the lumen of microtubules. Acetylates only long/old microtubules because of its slow acetylation rate since it does not have time to act on dynamically unstable microtubules before the enzyme is released. Required for normal sperm flagellar function. Promotes directional cell locomotion and chemotaxis, through AP2A2-dependent acetylation of alpha-tubulin at clathrin-coated pits that are concentrated at the leading edge of migrating cells. May facilitate primary cilium assembly. The sequence is that of Alpha-tubulin N-acetyltransferase 1 from Homo sapiens (Human).